The chain runs to 173 residues: Ribosome maturation factor RimM (173 aa).

A PRC barrel domain is found at 90-169 (EDEYFWFDIL…RIDTKGAQDI (80 aa)).

Belongs to the RimM family. As to quaternary structure, binds ribosomal protein uS19.

The protein localises to the cytoplasm. Its function is as follows. An accessory protein needed during the final step in the assembly of 30S ribosomal subunit, possibly for assembly of the head region. Essential for efficient processing of 16S rRNA. May be needed both before and after RbfA during the maturation of 16S rRNA. It has affinity for free ribosomal 30S subunits but not for 70S ribosomes. The polypeptide is Ribosome maturation factor RimM (Nitratiruptor sp. (strain SB155-2)).